Here is a 349-residue protein sequence, read N- to C-terminus: Hydroxymethylglutaryl-CoA synthase (349 aa).

2 residues coordinate (3S)-3-hydroxy-3-methylglutaryl-CoA: aspartate 29 and alanine 30. Catalysis depends on glutamate 81, which acts as the Proton donor/acceptor. Residues cysteine 113 and threonine 154 each contribute to the (3S)-3-hydroxy-3-methylglutaryl-CoA site. The Acyl-thioester intermediate role is filled by cysteine 113. Arginine 202 is a CoA binding site. Residues threonine 204 and histidine 237 each coordinate (3S)-3-hydroxy-3-methylglutaryl-CoA. Histidine 237 (proton donor/acceptor) is an active-site residue. CoA is bound at residue lysine 242. Positions 246, 269, and 299 each coordinate (3S)-3-hydroxy-3-methylglutaryl-CoA.

The protein belongs to the thiolase-like superfamily. Archaeal HMG-CoA synthase family. Interacts with acetoacetyl-CoA thiolase that catalyzes the precedent step in the pathway and with a DUF35 protein. The acetoacetyl-CoA thiolase/HMG-CoA synthase complex channels the intermediate via a fused CoA-binding site, which allows for efficient coupling of the endergonic thiolase reaction with the exergonic HMGCS reaction.

It catalyses the reaction acetoacetyl-CoA + acetyl-CoA + H2O = (3S)-3-hydroxy-3-methylglutaryl-CoA + CoA + H(+). Its pathway is metabolic intermediate biosynthesis; (R)-mevalonate biosynthesis; (R)-mevalonate from acetyl-CoA: step 2/3. Functionally, catalyzes the condensation of acetyl-CoA with acetoacetyl-CoA to form 3-hydroxy-3-methylglutaryl-CoA (HMG-CoA). Functions in the mevalonate (MVA) pathway leading to isopentenyl diphosphate (IPP), a key precursor for the biosynthesis of isoprenoid compounds that are building blocks of archaeal membrane lipids. The sequence is that of Hydroxymethylglutaryl-CoA synthase from Methanosarcina barkeri (strain Fusaro / DSM 804).